A 226-amino-acid polypeptide reads, in one-letter code: ATP synthase F(0) complex subunit a (226 aa).

Helical transmembrane passes span 6 to 26 (FASFITPMMFGLPLVTLIVLF), 68 to 88 (WALMLMSLILFIGSTNLLGLL), 97 to 117 (QLSMNLGMAIPLWGGAVITGF), 138 to 158 (IPMLVIIETISLFIQPVALAV), 164 to 184 (ITAGHLLIHLIGGATLALMSI), and 189 to 209 (ALITFIILILLTVLEFAVAMI).

Belongs to the ATPase A chain family. In terms of assembly, component of the ATP synthase complex composed at least of ATP5F1A/subunit alpha, ATP5F1B/subunit beta, ATP5MC1/subunit c (homooctomer), MT-ATP6/subunit a, MT-ATP8/subunit 8, ATP5ME/subunit e, ATP5MF/subunit f, ATP5MG/subunit g, ATP5MK/subunit k, ATP5MJ/subunit j, ATP5F1C/subunit gamma, ATP5F1D/subunit delta, ATP5F1E/subunit epsilon, ATP5PF/subunit F6, ATP5PB/subunit b, ATP5PD/subunit d, ATP5PO/subunit OSCP. ATP synthase complex consists of a soluble F(1) head domain (subunits alpha(3) and beta(3)) - the catalytic core - and a membrane F(0) domain - the membrane proton channel (subunits c, a, 8, e, f, g, k and j). These two domains are linked by a central stalk (subunits gamma, delta, and epsilon) rotating inside the F1 region and a stationary peripheral stalk (subunits F6, b, d, and OSCP). Interacts with DNAJC30; interaction is direct.

The protein resides in the mitochondrion inner membrane. It carries out the reaction H(+)(in) = H(+)(out). Subunit a, of the mitochondrial membrane ATP synthase complex (F(1)F(0) ATP synthase or Complex V) that produces ATP from ADP in the presence of a proton gradient across the membrane which is generated by electron transport complexes of the respiratory chain. ATP synthase complex consist of a soluble F(1) head domain - the catalytic core - and a membrane F(1) domain - the membrane proton channel. These two domains are linked by a central stalk rotating inside the F(1) region and a stationary peripheral stalk. During catalysis, ATP synthesis in the catalytic domain of F(1) is coupled via a rotary mechanism of the central stalk subunits to proton translocation. With the subunit c (ATP5MC1), forms the proton-conducting channel in the F(0) domain, that contains two crucial half-channels (inlet and outlet) that facilitate proton movement from the mitochondrial intermembrane space (IMS) into the matrix. Protons are taken up via the inlet half-channel and released through the outlet half-channel, following a Grotthuss mechanism. This is ATP synthase F(0) complex subunit a from Ovis aries (Sheep).